The primary structure comprises 284 residues: P2R1A-PPP2R2A-interacting phosphatase regulator 1 (284 aa).

The disordered stretch occupies residues 1–65 (MAQEKMELDL…RRNSTTFPSR (65 aa)). A compositionally biased stretch (gly residues) spans 20-29 (EGGGPGGGGL). S32 carries the phosphoserine modification. At S34 the chain carries Phosphoserine; by CHEK1. Phosphoserine is present on residues S42, S45, S59, and S73. K86 is covalently cross-linked (Glycyl lysine isopeptide (Lys-Gly) (interchain with G-Cter in SUMO1)). Phosphoserine occurs at positions 140 and 144. A Phosphothreonine modification is found at T146. The disordered stretch occupies residues 164-185 (SNGLPPSPIPSPTTRFTTRRSQ). The span at 175-185 (PTTRFTTRRSQ) shows a compositional bias: low complexity. A phosphoserine mark is found at S184 and S186. Positions 233–284 (GVCVSSDTLDGNSSSAGSSCNSPAKVSTTTDSPVSPAQAASPFIPVDELSSK) are disordered. Positions 243-254 (GNSSSAGSSCNS) are enriched in low complexity. Residues 256 to 267 (AKVSTTTDSPVS) are compositionally biased toward polar residues. A phosphoserine mark is found at S264, S267, and S273.

The protein belongs to the FAM122 family. As to quaternary structure, interacts with PPP2CA and PPP2R1A. Interacts (via its N-terminus) with PPP2R2A; the interaction is direct and this interaction inhibits PP2A activity. The CHEK1-mediated Ser-34 phosphorylated form interacts with 14-3-3 proteins. In terms of processing, CHEK1-mediated phosphorylation at Ser-34 negatively regulates its ability to inhibit serine/threonine-protein phosphatase 2A (PP2A) activity. Phosphorylation leads to its release from the PP2A complex and its sequestration by 14-3-3 proteins in the cytoplasm resulting in its inability to translocate to the nucleus, where it otherwise inhibits PP2A.

The protein resides in the nucleus. Its subcellular location is the cytoplasm. In terms of biological role, acts as an inhibitor of serine/threonine-protein phosphatase 2A (PP2A) activity. Inhibits PP2A activity by blocking the substrate binding site on PPP2R2A and the active site of PPP2CA. Potentiates ubiquitin-mediated proteasomal degradation of serine/threonine-protein phosphatase 2A catalytic subunit alpha (PPP2CA). Inhibits PP2A-mediated dephosphorylation of WEE1, promoting ubiquitin-mediated proteolysis of WEE1, thereby releasing G2/M checkpoint. The chain is P2R1A-PPP2R2A-interacting phosphatase regulator 1 from Mus musculus (Mouse).